An 85-amino-acid polypeptide reads, in one-letter code: Small ribosomal subunit protein uS15c (85 aa).

The protein belongs to the universal ribosomal protein uS15 family. As to quaternary structure, part of the 30S ribosomal subunit.

The protein localises to the plastid. Its subcellular location is the chloroplast. The protein is Small ribosomal subunit protein uS15c (rps15) of Chaetosphaeridium globosum (Charophycean green alga).